The following is a 422-amino-acid chain: Dihydrolipoyllysine-residue succinyltransferase component of 2-oxoglutarate dehydrogenase complex (422 aa).

The Lipoyl-binding domain occupies 1-76 (MPEVKVPELA…EVGQAIAIIG (76 aa)). The residue at position 42 (lysine 42) is an N6-lipoyllysine. A disordered region spans residues 77-185 (EGSGNASKEN…SAKEEKKYNQ (109 aa)). Composition is skewed to polar residues over residues 80-94 (GNAS…TPQQ) and 116-130 (NQAN…NATP). Positions 127–163 (NATPSARRYARENGVNLAEVSPKTNDVVRKEDIDKKQ) constitute a Peripheral subunit-binding (PSBD) domain. Over residues 152–163 (DVVRKEDIDKKQ) the composition is skewed to basic and acidic residues. The span at 164-176 (QAPASTQTTQQAS) shows a compositional bias: low complexity. Catalysis depends on residues histidine 393 and aspartate 397.

The protein belongs to the 2-oxoacid dehydrogenase family. As to quaternary structure, forms a 24-polypeptide structural core with octahedral symmetry. Part of the 2-oxoglutarate dehydrogenase (OGDH) complex composed of E1 (2-oxoglutarate dehydrogenase), E2 (dihydrolipoamide succinyltransferase) and E3 (dihydrolipoamide dehydrogenase); the complex contains multiple copies of the three enzymatic components (E1, E2 and E3). Requires (R)-lipoate as cofactor.

It catalyses the reaction N(6)-[(R)-dihydrolipoyl]-L-lysyl-[protein] + succinyl-CoA = N(6)-[(R)-S(8)-succinyldihydrolipoyl]-L-lysyl-[protein] + CoA. The protein operates within amino-acid degradation; L-lysine degradation via saccharopine pathway; glutaryl-CoA from L-lysine: step 6/6. In terms of biological role, E2 component of the 2-oxoglutarate dehydrogenase (OGDH) complex which catalyzes the second step in the conversion of 2-oxoglutarate to succinyl-CoA and CO(2). The polypeptide is Dihydrolipoyllysine-residue succinyltransferase component of 2-oxoglutarate dehydrogenase complex (odhB) (Staphylococcus aureus (strain USA300)).